We begin with the raw amino-acid sequence, 106 residues long: UPF0145 protein SCO3412 (106 aa).

The protein belongs to the UPF0145 family.

This Streptomyces coelicolor (strain ATCC BAA-471 / A3(2) / M145) protein is UPF0145 protein SCO3412.